A 100-amino-acid chain; its full sequence is Mitochondrial import inner membrane translocase subunit Tim10 B (100 aa).

A Twin CX3C motif motif is present at residues 25–49; it reads CFQRCVPSLHHRALDAEEEACLHSC. 2 disulfide bridges follow: C25–C49 and C29–C45.

It belongs to the small Tim family. As to quaternary structure, component of the TIM22 complex, which core is composed of TIMM22, associated with TIMM10 (TIMM10A and/or TIMM10B), TIMM9, AGK and TIMM29.

Its subcellular location is the mitochondrion inner membrane. Component of the TIM22 complex, a complex that mediates the import and insertion of multi-pass transmembrane proteins into the mitochondrial inner membrane. The TIM22 complex forms a twin-pore translocase that uses the membrane potential as the external driving force. In the TIM22 complex, it may act as a docking point for the soluble 70 kDa complex that guides the target proteins in transit through the aqueous mitochondrial intermembrane space. The sequence is that of Mitochondrial import inner membrane translocase subunit Tim10 B (Timm10b) from Mus musculus (Mouse).